Here is a 402-residue protein sequence, read N- to C-terminus: Triose phosphate/phosphate translocator, chloroplastic (402 aa).

The transit peptide at 1–72 directs the protein to the chloroplast; that stretch reads MESRVLSRAT…KGASLLRPCP (72 aa). The Chloroplast intermembrane segment spans residues 73 to 96; it reads ATAGGNDSAGEEKVAPVGFFSRYP. Residues 97 to 117 form a helical membrane-spanning segment; it reads ALTTGFFFFTWYFLNVIFNIL. Over 118-129 the chain is Lumenal; the sequence is NKKIYNYFPYPY. The chain crosses the membrane as a helical span at residues 130-150; sequence FVSVIHLAVGVVYCLVSWTVG. Topologically, residues 151–207 are chloroplast intermembrane; it reads LPKRAPIDGNLLKLLIPVAVCHALGHVTSNVSFAAVAVSFTHTVKALEPFFNAAASQ. The chain crosses the membrane as a helical span at residues 208–228; that stretch reads FILGQSIPITLWLSLAPVVIG. Topologically, residues 229-272 are lumenal; sequence VSMASLTELSFNWLGFISAMISNISFTYRSIYSKKAMTDMDSTN. The chain crosses the membrane as a helical span at residues 273 to 292; it reads IYAYISIIALIVCIPPALII. The Chloroplast intermembrane portion of the chain corresponds to 293–370; that stretch reads EGPTLLKTGF…IIFGNKISTQ (78 aa). The chain crosses the membrane as a helical span at residues 371-391; sequence TGIGTGIAIAGVALYSFIKAQ. Over 392 to 402 the chain is Lumenal; the sequence is IEEEKRQAKAA.

This sequence belongs to the TPT transporter family. TPT (TC 2.A.7.9) subfamily. In terms of assembly, homodimer.

The protein resides in the plastid. It is found in the chloroplast membrane. Its function is as follows. Mediates the export of fixed carbons from the chloroplasts into the cytosol in the form of triose phosphates. This is Triose phosphate/phosphate translocator, chloroplastic from Pisum sativum (Garden pea).